The following is a 176-amino-acid chain: Small ribosomal subunit protein uS5 (176 aa).

Residues 11–74 enclose the S5 DRBM domain; the sequence is LSEVLVDVNR…QAAKKKMMKV (64 aa).

Belongs to the universal ribosomal protein uS5 family. As to quaternary structure, part of the 30S ribosomal subunit. Contacts proteins S4 and S8.

In terms of biological role, with S4 and S12 plays an important role in translational accuracy. Functionally, located at the back of the 30S subunit body where it stabilizes the conformation of the head with respect to the body. This chain is Small ribosomal subunit protein uS5, found in Rickettsia bellii (strain RML369-C).